Here is a 411-residue protein sequence, read N- to C-terminus: Dihydrosphingosine 1-phosphate phosphatase C823.11 (411 aa).

Over 1–74 the chain is Lumenal; the sequence is MVHKKKNVDI…LDVYFMYTAT (74 aa). Residues 75-95 traverse the membrane as a helical segment; that stretch reads LGTHVFFMLALPIFFWSGCIY. At 96–99 the chain is on the cytoplasmic side; sequence YTLD. A helical membrane pass occupies residues 100-120; the sequence is ITQLFAAGVYFSGCIKDYFCL. The phosphatase sequence motif I stretch occupies residues 115 to 123; sequence KDYFCLPRP. Topologically, residues 121–170 are lumenal; the sequence is PRPRSPPMVRLTLSSDAEYEYGFPSTHTTNAMATGFYSLFLLLSMSDSMS. The phosphatase sequence motif II stretch occupies residues 144–147; that stretch reads PSTH. His-147 acts as the Proton donor in catalysis. The chain crosses the membrane as a helical span at residues 171 to 191; it reads SISYYFLLSLVLLYIASISLG. The phosphatase sequence motif III stretch occupies residues 191–202; that stretch reads GRIYCGMHGFMD. Residues 192 to 195 lie on the Cytoplasmic side of the membrane; the sequence is RIYC. The chain crosses the membrane as a helical span at residues 196–216; the sequence is GMHGFMDVSTGTILGVTLAIF. His-198 acts as the Nucleophile in catalysis. Over 217 to 233 the chain is Lumenal; that stretch reads QWKYADFFHNVWSSSST. A helical membrane pass occupies residues 234–254; the sequence is SVPILSVVLALFFIWFHPQPA. The Cytoplasmic segment spans residues 255–259; sequence ERCIC. Residues 260–280 form a helical membrane-spanning segment; the sequence is LEDSISFISVIMGIDLGTWFA. Topologically, residues 281-293 are lumenal; sequence SPESLSHLHDNLN. A helical membrane pass occupies residues 294 to 314; sequence SYFLLKFFVRVLFGVCMILIW. The Cytoplasmic portion of the chain corresponds to 315-387; it reads KSFAKQALLA…VRFDIETIAR (73 aa). The chain crosses the membrane as a helical span at residues 388–408; sequence IIVYSGIGFLCTYFAPKVFLK. The Lumenal segment spans residues 409–411; it reads WKI.

This sequence belongs to the type 2 lipid phosphate phosphatase family.

Its subcellular location is the endoplasmic reticulum membrane. In terms of biological role, dihydrosphingosine 1-phosphate phosphatase required for efficient ceramide synthesis from exogenous sphingoid bases. Involved in endocytosis and calcium-mediated signaling. The polypeptide is Dihydrosphingosine 1-phosphate phosphatase C823.11 (Schizosaccharomyces pombe (strain 972 / ATCC 24843) (Fission yeast)).